The following is a 52-amino-acid chain: Gastrin/cholecystokinin-like peptide (52 aa).

The protein belongs to the gastrin/cholecystokinin family.

The protein localises to the secreted. May control digestion processes. The polypeptide is Gastrin/cholecystokinin-like peptide (Trachemys scripta (Red-eared slider turtle)).